A 1307-amino-acid polypeptide reads, in one-letter code: Contactin-associated protein like 5-3 (1307 aa).

The signal sequence occupies residues 1–24 (MDFVPRLNSVLTLVLSGLWHFGLT). Over 25–1238 (ATNCDNCDDP…PLTNAVLSDS (1214 aa)) the chain is Extracellular. In terms of domain architecture, F5/8 type C spans 31–175 (CDDPLASFLS…IGMRMEVYGC (145 aa)). A disulfide bridge connects residues Cys31 and Cys175. Laminin G-like domains follow at residues 181–361 (VADF…TFSC) and 368–545 (PITF…IDLC). Asn283 is a glycosylation site (N-linked (GlcNAc...) asparagine). Cys330 and Cys361 are disulfide-bonded. Asn497 is a glycosylation site (N-linked (GlcNAc...) asparagine). 4 disulfide bridges follow: Cys513–Cys545, Cys551–Cys562, Cys556–Cys571, and Cys573–Cys583. The EGF-like 1 domain occupies 547-584 (IKDRCLPNYCEHGGHCVQTWTTFYCNCSNTGYTGATCH). One can recognise a Fibrinogen C-terminal domain in the interval 585 to 792 (DSIYEQSCEV…LRCYGDRHFW (208 aa)). N-linked (GlcNAc...) asparagine glycans are attached at residues Asn600, Asn624, and Asn637. A Laminin G-like 3 domain is found at 793 to 958 (NAVSFSTEAS…MVTSGVRPGC (166 aa)). Disulfide bonds link Cys931–Cys958, Cys962–Cys975, Cys969–Cys984, Cys986–Cys996, and Cys1165–Cys1200. The EGF-like 2 domain occupies 959 to 997 (PGHCSSYGNNCHNGGKCVEKHNSYSCDCTKSPYEGPFCQ). A Laminin G-like 4 domain is found at 1019 to 1200 (PVSKNTSTSS…VQGSLREFSC (182 aa)). The helical transmembrane segment at 1239–1259 (AVIGGVIAVVTFITFCVIGIM) threads the bilayer. Residues 1260–1307 (TRFLYQHKQSHCTSQKKEKEYSENLDSSFRHDIDLQSTTSKCKREYFI) lie on the Cytoplasmic side of the membrane.

It belongs to the neurexin family.

Its subcellular location is the membrane. In terms of biological role, may play a role in the correct development and proper functioning of the peripheral and central nervous system and be involved in cell adhesion and intercellular communication. This is Contactin-associated protein like 5-3 (Cntnap5c) from Rattus norvegicus (Rat).